Consider the following 332-residue polypeptide: MSERVLIDGYNRRVDYLRMSVTDRCDFRCVYCMAEDMQFLPRQRVLTLEEIYQLAQSFVALGTRKIRLTGGEPLIRPGVVGLCKQIAALPGLRELCLTTNGSQLGKLASPLFDAGVKRLNVSLDSLDAERFKQMTRTGDLAQVIDGIDAARAAGFTRTKLNCVVMQGRNDHEINDLVQFAIERDLDISFIEEMPLGIISEHSRAESFFSSTQVRERIAERYTLIDSAESTHGPSRYWRLAEAPHIRLGFISPHSHNFCGTCNRVRLTVEGRLLLCLGNEHSVDLKAVLRAHPGQPERLEKAIIEAMKLKPYRHNFEVNDDVQVVRFMNMTGG.

The region spanning 9–220 is the Radical SAM core domain; it reads GYNRRVDYLR…TQVRERIAER (212 aa). Arg-18 is a GTP binding site. [4Fe-4S] cluster is bound by residues Cys-25 and Cys-29. Tyr-31 is a binding site for S-adenosyl-L-methionine. Cys-32 provides a ligand contact to [4Fe-4S] cluster. Arg-67 is a GTP binding site. Gly-71 contacts S-adenosyl-L-methionine. Thr-98 contacts GTP. Ser-122 is a binding site for S-adenosyl-L-methionine. Lys-159 is a GTP binding site. Position 193 (Met-193) interacts with S-adenosyl-L-methionine. [4Fe-4S] cluster is bound by residues Cys-258 and Cys-261. 263–265 is a binding site for GTP; that stretch reads RVR. Cys-275 contacts [4Fe-4S] cluster.

This sequence belongs to the radical SAM superfamily. MoaA family. In terms of assembly, monomer and homodimer. [4Fe-4S] cluster serves as cofactor.

It catalyses the reaction GTP + AH2 + S-adenosyl-L-methionine = (8S)-3',8-cyclo-7,8-dihydroguanosine 5'-triphosphate + 5'-deoxyadenosine + L-methionine + A + H(+). It participates in cofactor biosynthesis; molybdopterin biosynthesis. Catalyzes the cyclization of GTP to (8S)-3',8-cyclo-7,8-dihydroguanosine 5'-triphosphate. The chain is GTP 3',8-cyclase from Pseudomonas fluorescens (strain Pf0-1).